A 241-amino-acid chain; its full sequence is Orotidine 5'-phosphate decarboxylase (241 aa).

Residues D15, K36, 63 to 72 (DLKFHDIPNT), T127, R189, Q198, G218, and R219 each bind substrate. The active-site Proton donor is K65.

Belongs to the OMP decarboxylase family. Type 1 subfamily. Homodimer.

It carries out the reaction orotidine 5'-phosphate + H(+) = UMP + CO2. It participates in pyrimidine metabolism; UMP biosynthesis via de novo pathway; UMP from orotate: step 2/2. Functionally, catalyzes the decarboxylation of orotidine 5'-monophosphate (OMP) to uridine 5'-monophosphate (UMP). The polypeptide is Orotidine 5'-phosphate decarboxylase (Prochlorococcus marinus (strain MIT 9211)).